Consider the following 61-residue polypeptide: Large ribosomal subunit protein eL37 (61 aa).

Zn(2+) is bound by residues Cys19, Cys22, Cys34, and Cys37. A C4-type zinc finger spans residues 19-37 (CRRCGRNAYNVSKHYCAAC).

This sequence belongs to the eukaryotic ribosomal protein eL37 family. Requires Zn(2+) as cofactor.

Binds to the 23S rRNA. This Saccharolobus islandicus (strain L.S.2.15 / Lassen #1) (Sulfolobus islandicus) protein is Large ribosomal subunit protein eL37.